Here is a 292-residue protein sequence, read N- to C-terminus: Phosphotriesterase homology protein (292 aa).

The Zn(2+) site is built by His-12, His-14, and Glu-125. A beta-D-glucose-binding site is contributed by 148-149 (HN). His-158 is a binding site for Zn(2+). Residues Gly-176, Asp-178, and Arg-181 each contribute to the beta-D-glucose site. Positions 186 and 243 each coordinate Zn(2+). Positions 280 and 284 each coordinate beta-D-glucose.

The protein belongs to the metallo-dependent hydrolases superfamily. Phosphotriesterase family. Monomer. Requires Zn(2+) as cofactor.

With respect to regulation, activity is higher in the enzyme containing Mn(2+) than that containing Zn(2+). In terms of biological role, catalyzes the hydrolysis of phosphorylated glyceryl acetates in which the presence of a phosphate group is required for the enzymatic hydrolysis. Hydrolyzes a dibutyl glycerol derivative suggesting it acts on phosphoglycerol substrates with a butyrate leaving group. Also active with aromatic acetates and propionates. No activity with various sugar phosphates, with various nitrophenylphosphate or nitrophenylphosphonate derivatives, or with phosphorylated or non-phosphorylated sugar lactones tested. Does not hydrolyze non-phosphorylated carboxyesters with long chain leaving groups. No general esterase, aminopeptidase, sulfatase, phosphatase, carbonic anhydrase, phosphodiesterase, and phosphotriesterase activities detected when tested with the following non-specific substrates: p-nitrophenyl acetate, L-alanine nitroanilide, p-nitrophenyl sulfate, bis(p-nitrophenyl) phosphate, paraoxon, and p-nitrophenyl phosphate. The sequence is that of Phosphotriesterase homology protein from Escherichia coli (strain K12).